A 346-amino-acid chain; its full sequence is MQSSQLLPLGSLLLSFATPLAQADALHDQASALFKPIPEQVTELRGQPISEQQRELGKKLFFDPRLSRSHVLSCNTCHNVGTGGADNVPTSVGHGWQKGPRNSPTVFNAVFNAAQFWDGRAKDLGEQAKGPIQNSVEMHSTPQLVEQTLGSIPEYVDAFRKAFPKAGKPVSFDNMALAIEAYEATLVTPDSPFDLYLKGDDKALDAQQKKGLKAFMDSGCSACHNGINLGGQAYFPFGLVKKPDASVLPSGDKGRFAVTKTQSDEYVFRAAPLRNVALTAPYFHSGQVWELKDAVAIMGNAQLGKQLAPDDVENIVAFLHSLSGKQPRVEYPLLPASTETTPRPAE.

The signal sequence occupies residues 1 to 23 (MQSSQLLPLGSLLLSFATPLAQA). Positions 74, 77, 78, 220, 223, 224, 284, and 298 each coordinate heme c.

The cofactor is heme c. Post-translationally, binds 2 heme groups per subunit. Sequencing of the whole protein indicates about 20% starts on Val-247.

It localises to the periplasm. It carries out the reaction 2 Fe(II)-[cytochrome c] + H2O2 + 2 H(+) = 2 Fe(III)-[cytochrome c] + 2 H2O. Functionally, catalyzes the peroxidative oxidation of azurin and cytochrome c551. Likely to provide protection against toxic peroxides. The chain is Cytochrome c551 peroxidase (ccpA) from Pseudomonas aeruginosa (strain ATCC 15692 / DSM 22644 / CIP 104116 / JCM 14847 / LMG 12228 / 1C / PRS 101 / PAO1).